The primary structure comprises 375 residues: Succinyl-diaminopimelate desuccinylase (375 aa).

Position 66 (histidine 66) interacts with Zn(2+). Aspartate 68 is an active-site residue. A Zn(2+)-binding site is contributed by aspartate 99. Glutamate 133 functions as the Proton acceptor in the catalytic mechanism. Zn(2+) is bound by residues glutamate 134, glutamate 162, and histidine 348.

It belongs to the peptidase M20A family. DapE subfamily. Homodimer. The cofactor is Zn(2+). Co(2+) serves as cofactor.

It carries out the reaction N-succinyl-(2S,6S)-2,6-diaminopimelate + H2O = (2S,6S)-2,6-diaminopimelate + succinate. It functions in the pathway amino-acid biosynthesis; L-lysine biosynthesis via DAP pathway; LL-2,6-diaminopimelate from (S)-tetrahydrodipicolinate (succinylase route): step 3/3. Functionally, catalyzes the hydrolysis of N-succinyl-L,L-diaminopimelic acid (SDAP), forming succinate and LL-2,6-diaminopimelate (DAP), an intermediate involved in the bacterial biosynthesis of lysine and meso-diaminopimelic acid, an essential component of bacterial cell walls. This is Succinyl-diaminopimelate desuccinylase from Escherichia coli O139:H28 (strain E24377A / ETEC).